A 431-amino-acid chain; its full sequence is Glutamate-1-semialdehyde 2,1-aminomutase (431 aa).

K269 is modified (N6-(pyridoxal phosphate)lysine).

This sequence belongs to the class-III pyridoxal-phosphate-dependent aminotransferase family. HemL subfamily. Homodimer. The cofactor is pyridoxal 5'-phosphate.

The protein resides in the cytoplasm. It carries out the reaction (S)-4-amino-5-oxopentanoate = 5-aminolevulinate. The protein operates within porphyrin-containing compound metabolism; protoporphyrin-IX biosynthesis; 5-aminolevulinate from L-glutamyl-tRNA(Glu): step 2/2. It participates in porphyrin-containing compound metabolism; chlorophyll biosynthesis. The polypeptide is Glutamate-1-semialdehyde 2,1-aminomutase (Chlorobium phaeovibrioides (strain DSM 265 / 1930) (Prosthecochloris vibrioformis (strain DSM 265))).